A 244-amino-acid chain; its full sequence is Aspartate/glutamate leucyltransferase (244 aa).

This sequence belongs to the R-transferase family. Bpt subfamily.

The protein localises to the cytoplasm. It catalyses the reaction N-terminal L-glutamyl-[protein] + L-leucyl-tRNA(Leu) = N-terminal L-leucyl-L-glutamyl-[protein] + tRNA(Leu) + H(+). The catalysed reaction is N-terminal L-aspartyl-[protein] + L-leucyl-tRNA(Leu) = N-terminal L-leucyl-L-aspartyl-[protein] + tRNA(Leu) + H(+). In terms of biological role, functions in the N-end rule pathway of protein degradation where it conjugates Leu from its aminoacyl-tRNA to the N-termini of proteins containing an N-terminal aspartate or glutamate. This Paramagnetospirillum magneticum (strain ATCC 700264 / AMB-1) (Magnetospirillum magneticum) protein is Aspartate/glutamate leucyltransferase.